Here is a 320-residue protein sequence, read N- to C-terminus: Ribosomal protein L11 methyltransferase (320 aa).

T165, G186, D208, and N251 together coordinate S-adenosyl-L-methionine.

The protein belongs to the methyltransferase superfamily. PrmA family.

The protein resides in the cytoplasm. The catalysed reaction is L-lysyl-[protein] + 3 S-adenosyl-L-methionine = N(6),N(6),N(6)-trimethyl-L-lysyl-[protein] + 3 S-adenosyl-L-homocysteine + 3 H(+). Functionally, methylates ribosomal protein L11. The polypeptide is Ribosomal protein L11 methyltransferase (Limosilactobacillus fermentum (strain NBRC 3956 / LMG 18251) (Lactobacillus fermentum)).